The chain runs to 488 residues: Proline--tRNA ligase (488 aa).

It belongs to the class-II aminoacyl-tRNA synthetase family. ProS type 3 subfamily. As to quaternary structure, homodimer.

The protein resides in the cytoplasm. The catalysed reaction is tRNA(Pro) + L-proline + ATP = L-prolyl-tRNA(Pro) + AMP + diphosphate. Catalyzes the attachment of proline to tRNA(Pro) in a two-step reaction: proline is first activated by ATP to form Pro-AMP and then transferred to the acceptor end of tRNA(Pro). The chain is Proline--tRNA ligase from Borrelia garinii subsp. bavariensis (strain ATCC BAA-2496 / DSM 23469 / PBi) (Borreliella bavariensis).